The following is a 552-amino-acid chain: Urocanate hydratase (552 aa).

NAD(+)-binding positions include 49–50 (GG), Gln-127, 173–175 (GMG), Asp-193, 239–240 (NA), 260–264 (QTSAH), 270–271 (YI), and Tyr-319. Cys-407 is an active-site residue. An NAD(+)-binding site is contributed by Gly-489.

The protein belongs to the urocanase family. The cofactor is NAD(+).

The protein resides in the cytoplasm. The enzyme catalyses 4-imidazolone-5-propanoate = trans-urocanate + H2O. It participates in amino-acid degradation; L-histidine degradation into L-glutamate; N-formimidoyl-L-glutamate from L-histidine: step 2/3. Its function is as follows. Catalyzes the conversion of urocanate to 4-imidazolone-5-propionate. The protein is Urocanate hydratase of Bacillus cereus (strain B4264).